The sequence spans 510 residues: MVTKEEDCLPPVTETTSRCYSTSSSTPLAELETVRSLEIVESSSSLSPVWLLVIFCIINLLNYMDRGAIASNGVNGSTRSCNDKGKCTLATGIQGHFNLSNFEDGVLSSSFMVGLLIASPIFASLAKRLIGVGLTVWTIAVLGCGSSFAFWFIVLCRMFVGVGEASFISLAAPFIDDNAPQEQKAAWLGLFYMCIPSGVALGYVYGGYVGKHFSWRYAFWGEAVLMAPFAVLGFLMKPLQLKGSETLKNNNRLQVDNEIEHDQFEVSIETSKSSYANAVFKSFTGFAKDMKVLYKEKVFVVNVLGYVSYNFVIGAYSYWGPKAGYNIYKMKNADMIFGAVTIICGIVGTLSGGFILDRVTATIPNAFKLLSGATFLGAVFCFTAFTLKSLYGFIALFALGELLVFATQAPVNYVCLHCVKPSLRPLSMAISTVAIHIFGDVPSSPLVGIVQDHINSWRKTTLILTSILFLAAAIWFIGKINLNSFYSNDESFLVQIKLFVANLCFCKGYS.

Residues 44–64 (SSLSPVWLLVIFCIINLLNYM) form a helical membrane-spanning segment. N-linked (GlcNAc...) asparagine glycosylation is found at asparagine 75 and asparagine 98. Transmembrane regions (helical) follow at residues 106–126 (VLSS…ASLA), 136–156 (VWTI…IVLC), 158–178 (MFVG…IDDN), 185–205 (AAWL…GYVY), 219–239 (FWGE…MKPL), 298–318 (VFVV…AYSY), 336–356 (IFGA…GFIL), 369–387 (LLSG…AFTL), 392–414 (GFIA…VNYV), 430–450 (ISTV…VGIV), and 462–482 (LILT…KINL).

This sequence belongs to the major facilitator superfamily. Spinster (TC 2.A.1.49) family.

The protein resides in the mitochondrion inner membrane. Functionally, probable sphingolipid transporter. The chain is Probable sphingolipid transporter spinster homolog 3 from Arabidopsis thaliana (Mouse-ear cress).